The primary structure comprises 189 residues: Cancer/testis antigen family 45 member A2 (189 aa).

This sequence belongs to the CT45 family. Testis specific. Expressed in cancer cell lines.

In Homo sapiens (Human), this protein is Cancer/testis antigen family 45 member A2.